Reading from the N-terminus, the 470-residue chain is Dendritic cell-specific transmembrane protein (470 aa).

At 1–34 the chain is on the cytoplasmic side; sequence MGIWTSGTDIFLSLWEIYVSPRSPGWMDFIQHLG. Residues 35–55 form a helical membrane-spanning segment; that stretch reads VCCLVALISVGLLSVAACWFL. Residues 56 to 57 are Extracellular-facing; sequence PS. A helical transmembrane segment spans residues 58 to 78; that stretch reads IIAAAASWIITCVLLCCSKHA. At 79–97 the chain is on the cytoplasmic side; that stretch reads RCFILLVFLSCGLREGRNA. Residues 98–118 form a helical membrane-spanning segment; it reads LIAAGTGIVILGHVENIFHNF. The Extracellular segment spans residues 119–209; the sequence is KGLLDGMTCN…MATTTEVLSS (91 aa). Residues 210 to 230 form a helical membrane-spanning segment; it reads LGQKLLAFAGLSLVLLGTGLF. The Cytoplasmic segment spans residues 231 to 292; the sequence is MKRFLGPCGW…FWPTPKERKN (62 aa). The helical transmembrane segment at 293–313 threads the bilayer; the sequence is LGLFFLPILIHLCIWVLFAAV. Residues 314-376 lie on the Extracellular side of the membrane; that stretch reads DYLLYRLIFS…PKPKFLLSET (63 aa). The helical transmembrane segment at 377-397 threads the bilayer; the sequence is WVPLSVILLILVMLGLLSSIL. At 398-470 the chain is on the cytoplasmic side; sequence MQLKILVSAS…QMDMASADKS (73 aa).

Monomer. Homodimer. Isoform 1 interacts (via the C-terminus cytoplasmic tail) with OS9 isoform 1 (via the C-terminus tail); the interaction induces DCSTAMP redistribution to the endoplasmic reticulum-Golgi intermediate compartment. Isoform 1 interacts (via the C-terminus cytoplasmic tail) with OS9 isoform 2 (via the C-terminus tail). Interacts with CREB3. In terms of processing, glycosylated. As to expression, preferentially expressed by dendritic cells (DCs). Detected in both immature and mature DCs. Highly expressed in lymph nodes, lung, kidney and liver. Expressed at lower levels in pancreas, bone marrow, spleen, leukocytes, in freshly isolated peripheral blood mononuclear cells (PBMC) and B-cells. Not expressed in freshly isolated monocytes.

The protein resides in the cell membrane. Its subcellular location is the endoplasmic reticulum membrane. The protein localises to the endoplasmic reticulum-Golgi intermediate compartment membrane. It localises to the endosome. Functionally, probable cell surface receptor that plays several roles in cellular fusion, cell differentiation, bone and immune homeostasis. Plays a role in TNFSF11-mediated osteoclastogenesis. Cooperates with OCSTAMP in modulating cell-cell fusion in both osteoclasts and foreign body giant cells (FBGCs). Participates in osteoclast bone resorption. Involved in inducing the expression of tartrate-resistant acid phosphatase in osteoclast precursors. Plays a role in haematopoietic stem cell differentiation of bone marrow cells toward the myeloid lineage. Inhibits the development of neutrophilic granulocytes. Plays also a role in the regulation of dendritic cell (DC) antigen presentation activity by controlling phagocytic activity. Involved in the maintenance of immune self-tolerance and avoidance of autoimmune reactions. This chain is Dendritic cell-specific transmembrane protein (DCSTAMP), found in Homo sapiens (Human).